Here is a 251-residue protein sequence, read N- to C-terminus: Triosephosphate isomerase (251 aa).

9–11 provides a ligand contact to substrate; the sequence is NWK. Catalysis depends on His95, which acts as the Electrophile. Glu167 functions as the Proton acceptor in the catalytic mechanism. Substrate-binding positions include Gly173, Ser213, and 234–235; that span reads GG. The residue at position 213 (Ser213) is a Phosphoserine.

Belongs to the triosephosphate isomerase family. As to quaternary structure, homodimer.

The protein resides in the cytoplasm. It carries out the reaction D-glyceraldehyde 3-phosphate = dihydroxyacetone phosphate. The protein operates within carbohydrate biosynthesis; gluconeogenesis. It participates in carbohydrate degradation; glycolysis; D-glyceraldehyde 3-phosphate from glycerone phosphate: step 1/1. Functionally, involved in the gluconeogenesis. Catalyzes stereospecifically the conversion of dihydroxyacetone phosphate (DHAP) to D-glyceraldehyde-3-phosphate (G3P). The sequence is that of Triosephosphate isomerase from Bacillus mycoides (strain KBAB4) (Bacillus weihenstephanensis).